Consider the following 1013-residue polypeptide: GTPase-activating Rap/Ran-GAP domain-like protein 3 (1013 aa).

At serine 45 the chain carries Phosphoserine. The region spanning 191–407 is the Rap-GAP domain; the sequence is LLVLEEQEGS…RTLDMLIRSL (217 aa). A phosphoserine mark is found at serine 426 and serine 432. The region spanning 489-800 is the CNH domain; the sequence is PHEAVCADPW…QLVASRSDIY (312 aa). Disordered regions lie at residues 810 to 842 and 913 to 1013; these read VSSGGSSKGASARNSPQTPPGRDTPVFPSSLGE and LLGL…IDLK. Positions 811-821 are enriched in low complexity; it reads SSGGSSKGASA. Threonine 827 is modified (phosphothreonine). Low complexity predominate over residues 952–962; that stretch reads SSSSDRIPSGS. 2 stretches are compositionally biased toward polar residues: residues 963-982 and 993-1003; these read LESASTSEANPEGHSASSDQ and VSGSSPFQLTA.

Belongs to the GARNL3 family.

The polypeptide is GTPase-activating Rap/Ran-GAP domain-like protein 3 (GARNL3) (Homo sapiens (Human)).